The primary structure comprises 157 residues: Stalk-specific protein B (157 aa).

A signal peptide spans 1 to 19; it reads MRSILILLSLLLTIAFASA.

The protein resides in the secreted. The chain is Stalk-specific protein B (staB) from Dictyostelium discoideum (Social amoeba).